Consider the following 224-residue polypeptide: PKHD-type hydroxylase Shewmr7_0698 (224 aa).

A Fe2OG dioxygenase domain is found at Gln-78–Ser-176. Residues His-96, Asp-98, and His-157 each contribute to the Fe cation site. Arg-167 lines the 2-oxoglutarate pocket.

The cofactor is Fe(2+). L-ascorbate is required as a cofactor.

The sequence is that of PKHD-type hydroxylase Shewmr7_0698 from Shewanella sp. (strain MR-7).